Consider the following 502-residue polypeptide: 2-isopropylmalate synthase (502 aa).

Mn(2+)-binding residues include aspartate 1, histidine 189, histidine 191, and asparagine 225. The Pyruvate carboxyltransferase domain occupies 1–254; it reads DGEQALQASL…STNINYKEIY (254 aa). The interval 379 to 502 is regulatory domain; that stretch reads CLKFFSVQSI…VNKKLQELKK (124 aa).

It belongs to the alpha-IPM synthase/homocitrate synthase family. LeuA type 1 subfamily. As to quaternary structure, homodimer. The cofactor is Mn(2+).

It localises to the cytoplasm. The catalysed reaction is 3-methyl-2-oxobutanoate + acetyl-CoA + H2O = (2S)-2-isopropylmalate + CoA + H(+). It functions in the pathway amino-acid biosynthesis; L-leucine biosynthesis; L-leucine from 3-methyl-2-oxobutanoate: step 1/4. In terms of biological role, catalyzes the condensation of the acetyl group of acetyl-CoA with 3-methyl-2-oxobutanoate (2-ketoisovalerate) to form 3-carboxy-3-hydroxy-4-methylpentanoate (2-isopropylmalate). This is 2-isopropylmalate synthase from Buchnera aphidicola subsp. Macrosiphoniella ludovicianae.